Here is a 199-residue protein sequence, read N- to C-terminus: MLRIGLTGGIGSGKSTVANYFAELGAPVIDADQIAHEITKPDQAAFKQIINHFGNAVLTKGKFLNRTKLRELIFENPDDRQWLENLLHPLIIAKMKTQLKKIKAPYCILAIPLLAEASQSVDFIDRILVVDAPETLQIQRTKSRDQLSDQQIQLILQSQSPREKRLAIADDVIVNDQTIPILRKAVFQLHCKYLQIAQT.

The region spanning 3 to 199 (RIGLTGGIGS…HCKYLQIAQT (197 aa)) is the DPCK domain. 11–16 (GSGKST) contacts ATP.

The protein belongs to the CoaE family.

It is found in the cytoplasm. It carries out the reaction 3'-dephospho-CoA + ATP = ADP + CoA + H(+). It participates in cofactor biosynthesis; coenzyme A biosynthesis; CoA from (R)-pantothenate: step 5/5. Its function is as follows. Catalyzes the phosphorylation of the 3'-hydroxyl group of dephosphocoenzyme A to form coenzyme A. This is Dephospho-CoA kinase from Coxiella burnetii (strain RSA 493 / Nine Mile phase I).